A 475-amino-acid polypeptide reads, in one-letter code: Ribulose bisphosphate carboxylase large chain (475 aa).

The propeptide occupies M1 to S2. P3 carries the post-translational modification N-acetylproline. At K14 the chain carries N6,N6,N6-trimethyllysine. 2 residues coordinate substrate: N123 and T173. Catalysis depends on K175, which acts as the Proton acceptor. K177 is a substrate binding site. 3 residues coordinate Mg(2+): K201, D203, and E204. The residue at position 201 (K201) is an N6-carboxylysine. The active-site Proton acceptor is the H294. The substrate site is built by R295, H327, and S379.

This sequence belongs to the RuBisCO large chain family. Type I subfamily. Heterohexadecamer of 8 large chains and 8 small chains; disulfide-linked. The disulfide link is formed within the large subunit homodimers. Mg(2+) is required as a cofactor. The disulfide bond which can form in the large chain dimeric partners within the hexadecamer appears to be associated with oxidative stress and protein turnover.

Its subcellular location is the plastid. The protein resides in the chloroplast. The catalysed reaction is 2 (2R)-3-phosphoglycerate + 2 H(+) = D-ribulose 1,5-bisphosphate + CO2 + H2O. It carries out the reaction D-ribulose 1,5-bisphosphate + O2 = 2-phosphoglycolate + (2R)-3-phosphoglycerate + 2 H(+). In terms of biological role, ruBisCO catalyzes two reactions: the carboxylation of D-ribulose 1,5-bisphosphate, the primary event in carbon dioxide fixation, as well as the oxidative fragmentation of the pentose substrate in the photorespiration process. Both reactions occur simultaneously and in competition at the same active site. The sequence is that of Ribulose bisphosphate carboxylase large chain from Fagopyrum esculentum subsp. ancestrale (Wild buckwheat).